The chain runs to 151 residues: MVSANQTASVTEFILLGLSAHPKLEKTFFVLILLMYLVILLGNGVLILMTVSNSHLHMPMYFFLGNLSFLDICYTTSSVPLILDSFLTPRKTISFSACAVQMFLSFAMGATECVLLSMMAFDRYVAICNPLRYPVVMSKAAYMPIRLPAPG.

Over 1–27 (MVSANQTASVTEFILLGLSAHPKLEKT) the chain is Extracellular. N-linked (GlcNAc...) asparagine glycosylation occurs at Asn5. A helical membrane pass occupies residues 28-48 (FFVLILLMYLVILLGNGVLIL). Residues 49-61 (MTVSNSHLHMPMY) are Cytoplasmic-facing. The chain crosses the membrane as a helical span at residues 62–82 (FFLGNLSFLDICYTTSSVPLI). At 83 to 100 (LDSFLTPRKTISFSACAV) the chain is on the extracellular side. The helical transmembrane segment at 101 to 121 (QMFLSFAMGATECVLLSMMAF) threads the bilayer.

It belongs to the G-protein coupled receptor 1 family.

It localises to the cell membrane. Functionally, odorant receptor. The sequence is that of Putative olfactory receptor 13C6 from Homo sapiens (Human).